Reading from the N-terminus, the 431-residue chain is Histidine--tRNA ligase (431 aa).

The protein belongs to the class-II aminoacyl-tRNA synthetase family. As to quaternary structure, homodimer.

The protein localises to the cytoplasm. It catalyses the reaction tRNA(His) + L-histidine + ATP = L-histidyl-tRNA(His) + AMP + diphosphate + H(+). The sequence is that of Histidine--tRNA ligase from Levilactobacillus brevis (strain ATCC 367 / BCRC 12310 / CIP 105137 / JCM 1170 / LMG 11437 / NCIMB 947 / NCTC 947) (Lactobacillus brevis).